A 449-amino-acid chain; its full sequence is MSAPMSASTSVVTRFAPSPTGFLHVGNLRTALFNFLIAKKAGGEFILRLDDTDPERSTQAFADAIQEDMEWLGLTWDRIERQSDRFDRYAAAADELRAKNRFYEAWETPTELDLKRKKQLNMHQPPVYDRAALALTDDQKEALRAERGQGVWRFKLDHQRIEWTDGILGDLSIDAASVSDPVLIRADGQVLYTIASVVDDTDMGVTHVVRGSDHVTNTATQIQIMEALGKSAPSFAHHSLLTGPQGEALSKRLGTLALRDLREAGMEPMALLSHMARIGSSQPVELAGSVEELAEGFDLNHFGSAPTKFDVEDLWPLTASVLHGTAFEDVAGEIAALGVPADIAPAFWEVARANIGKRAEIADWWALFRDGATPLVADEDREFVAQAFAMLPDLPYDETTWSNWTSAVKEATGRKGKGLFMPLRKAVTGRERGPEMADVMRLMQVKPTL.

Positions 17–27 (PSPTGFLHVGN) match the 'HIGH' region motif. The short motif at 248-252 (ALSKR) is the 'KMSKS' region element. Lys251 is an ATP binding site.

It belongs to the class-I aminoacyl-tRNA synthetase family. Glutamate--tRNA ligase type 1 subfamily. As to quaternary structure, monomer.

Its subcellular location is the cytoplasm. It carries out the reaction tRNA(Glu) + L-glutamate + ATP = L-glutamyl-tRNA(Glu) + AMP + diphosphate. In terms of biological role, catalyzes the attachment of glutamate to tRNA(Glu) in a two-step reaction: glutamate is first activated by ATP to form Glu-AMP and then transferred to the acceptor end of tRNA(Glu). The polypeptide is Glutamate--tRNA ligase 2 (Jannaschia sp. (strain CCS1)).